A 587-amino-acid chain; its full sequence is Probable phosphoribomutase (587 aa).

Substrate-binding positions include Thr49, Arg53, and 149-150 (SH). Ser149 acts as the Phosphoserine intermediate in catalysis. Residues Ser149, Asp306, Asp308, and Asp310 each coordinate Mg(2+). Residue Ser149 is modified to Phosphoserine. Substrate-binding positions include 310 to 311 (DR), Thr380, 404 to 406 (EEA), and Lys418.

It belongs to the phosphohexose mutase family. Requires Mg(2+) as cofactor.

Its subcellular location is the cytoplasm. It is found in the nucleus. It catalyses the reaction alpha-D-ribose 1-phosphate = D-ribose 5-phosphate. Functionally, converts ribose 1-phosphate to ribose 5-phosphate. Involved in ribose salvage via the pentose phosphate pathway. This Schizosaccharomyces pombe (strain 972 / ATCC 24843) (Fission yeast) protein is Probable phosphoribomutase.